The chain runs to 396 residues: Tryptophan synthase beta chain (396 aa).

Position 88 is an N6-(pyridoxal phosphate)lysine (Lys88).

It belongs to the TrpB family. Tetramer of two alpha and two beta chains. It depends on pyridoxal 5'-phosphate as a cofactor.

The catalysed reaction is (1S,2R)-1-C-(indol-3-yl)glycerol 3-phosphate + L-serine = D-glyceraldehyde 3-phosphate + L-tryptophan + H2O. It participates in amino-acid biosynthesis; L-tryptophan biosynthesis; L-tryptophan from chorismate: step 5/5. In terms of biological role, the beta subunit is responsible for the synthesis of L-tryptophan from indole and L-serine. The polypeptide is Tryptophan synthase beta chain (Shewanella baltica (strain OS195)).